The sequence spans 633 residues: MALRFPPRLLSQLKLSRRLNSLPAPVSEDSEDESLKFPSNDLLLRTSSNDLEGSYIPADRRFYNTLLKKCTVFKLLIQGRIVHAHILQSIFRHDIVMGNTLLNMYAKCGSLEEARKVFEKMPQRDFVTWTTLISGYSQHDRPCDALLFFNQMLRFGYSPNEFTLSSVIKAAAAERRGCCGHQLHGFCVKCGFDSNVHVGSALLDLYTRYGLMDDAQLVFDALESRNDVSWNALIAGHARRSGTEKALELFQGMLRDGFRPSHFSYASLFGACSSTGFLEQGKWVHAYMIKSGEKLVAFAGNTLLDMYAKSGSIHDARKIFDRLAKRDVVSWNSLLTAYAQHGFGKEAVWWFEEMRRVGIRPNEISFLSVLTACSHSGLLDEGWHYYELMKKDGIVPEAWHYVTVVDLLGRAGDLNRALRFIEEMPIEPTAAIWKALLNACRMHKNTELGAYAAEHVFELDPDDPGPHVILYNIYASGGRWNDAARVRKKMKESGVKKEPACSWVEIENAIHMFVANDERHPQREEIARKWEEVLAKIKELGYVPDTSHVIVHVDQQEREVNLQYHSEKIALAFALLNTPPGSTIHIKKNIRVCGDCHTAIKLASKVVGREIIVRDTNRFHHFKDGNCSCKDYW.

A mitochondrion-targeting transit peptide spans 1–63 (MALRFPPRLL…SYIPADRRFY (63 aa)). PPR repeat units follow at residues 94–124 (DIVMGNTLLNMYAKCGSLEEARKVFEKMPQR), 125–159 (DFVTWTTLISGYSQHDRPCDALLFFNQMLRFGYSP), 160–194 (NEFTLSSVIKAAAAERRGCCGHQLHGFCVKCGFDS), 195–225 (NVHVGSALLDLYTRYGLMDDAQLVFDALESR), 226–260 (NDVSWNALIAGHARRSGTEKALELFQGMLRDGFRP), 261–295 (SHFSYASLFGACSSTGFLEQGKWVHAYMIKSGEKL), 296–326 (VAFAGNTLLDMYAKSGSIHDARKIFDRLAKR), 327–361 (DVVSWNSLLTAYAQHGFGKEAVWWFEEMRRVGIRP), 362–396 (NEISFLSVLTACSHSGLLDEGWHYYELMKKDGIVP), and 397–431 (EAWHYVTVVDLLGRAGDLNRALRFIEEMPIEPTAA). The interval 432-507 (IWKALLNACR…EPACSWVEIE (76 aa)) is type E motif. The segment at 508-538 (NAIHMFVANDERHPQREEIARKWEEVLAKIK) is type E(+) motif. Residues 539–633 (ELGYVPDTSH…DGNCSCKDYW (95 aa)) are type DYW motif.

It belongs to the PPR family. PCMP-H subfamily.

It localises to the mitochondrion. The protein is Pentatricopeptide repeat-containing protein At3g24000, mitochondrial (PCMP-H87) of Arabidopsis thaliana (Mouse-ear cress).